The sequence spans 172 residues: uncharacterized protein (172 aa).

This is an uncharacterized protein from Agrobacterium tumefaciens (strain Ach5).